A 1082-amino-acid polypeptide reads, in one-letter code: Error-prone DNA polymerase (1082 aa).

The protein belongs to the DNA polymerase type-C family. DnaE2 subfamily.

The protein localises to the cytoplasm. The enzyme catalyses DNA(n) + a 2'-deoxyribonucleoside 5'-triphosphate = DNA(n+1) + diphosphate. DNA polymerase involved in damage-induced mutagenesis and translesion synthesis (TLS). It is not the major replicative DNA polymerase. The sequence is that of Error-prone DNA polymerase from Xanthomonas campestris pv. campestris (strain 8004).